Consider the following 200-residue polypeptide: Small heat shock protein hspG2 (200 aa).

A sHSP domain is found at 33 to 200; it reads NKRIDIIPSM…DNFQIKLKSI (168 aa). A disordered region spans residues 86–139; that stretch reads KLQQQQQQQSEKSSQSTNNKDDDEPSIEEYEDDTKLKSNLNKNTENKDENKTTS. Residues 88–101 are compositionally biased toward low complexity; that stretch reads QQQQQQQSEKSSQS. Positions 106–117 are enriched in acidic residues; it reads DDDEPSIEEYED.

The protein belongs to the small heat shock protein (HSP20) family.

This is Small heat shock protein hspG2 (hspG2) from Dictyostelium discoideum (Social amoeba).